Here is a 440-residue protein sequence, read N- to C-terminus: Adenylosuccinate lyase (440 aa).

Residues 4 to 5 (RY), 67 to 69 (KHD), and 93 to 94 (TS) contribute to the N(6)-(1,2-dicarboxyethyl)-AMP site. The Proton donor/acceptor role is filled by His141. Gln212 is a binding site for N(6)-(1,2-dicarboxyethyl)-AMP. The active-site Proton donor/acceptor is the Ser262. N(6)-(1,2-dicarboxyethyl)-AMP contacts are provided by residues Ser263, 268 to 270 (KRN), Asn276, and 307 to 311 (SVERF).

It belongs to the lyase 1 family. Adenylosuccinate lyase subfamily. In terms of assembly, homotetramer. Residues from neighboring subunits contribute catalytic and substrate-binding residues to each active site.

The catalysed reaction is N(6)-(1,2-dicarboxyethyl)-AMP = fumarate + AMP. The enzyme catalyses (2S)-2-[5-amino-1-(5-phospho-beta-D-ribosyl)imidazole-4-carboxamido]succinate = 5-amino-1-(5-phospho-beta-D-ribosyl)imidazole-4-carboxamide + fumarate. It participates in purine metabolism; AMP biosynthesis via de novo pathway; AMP from IMP: step 2/2. The protein operates within purine metabolism; IMP biosynthesis via de novo pathway; 5-amino-1-(5-phospho-D-ribosyl)imidazole-4-carboxamide from 5-amino-1-(5-phospho-D-ribosyl)imidazole-4-carboxylate: step 2/2. Catalyzes two reactions in de novo purine nucleotide biosynthesis. Catalyzes the breakdown of 5-aminoimidazole- (N-succinylocarboxamide) ribotide (SAICAR or 2-[5-amino-1-(5-phospho-beta-D-ribosyl)imidazole-4-carboxamido]succinate) to 5-aminoimidazole-4-carboxamide ribotide (AICAR or 5-amino-1-(5-phospho-beta-D-ribosyl)imidazole-4-carboxamide) and fumarate, and of adenylosuccinate (ADS or N(6)-(1,2-dicarboxyethyl)-AMP) to adenosine monophosphate (AMP) and fumarate. In Helicobacter pylori (strain ATCC 700392 / 26695) (Campylobacter pylori), this protein is Adenylosuccinate lyase (purB).